The sequence spans 145 residues: MAKNILLLNGPNLNMLGSREPEVYGSATLADVERAATEQASQAGAKLTAFQSNHEGVLIDRIQAAKKEGVDAIIINPGGLTHSSVSLRDALASVALPFVEVHVSNIHQREAFRHHSYLSGIAVGVICGLGIDGYTAAISFALKKL.

Tyrosine 24 acts as the Proton acceptor in catalysis. 3 residues coordinate substrate: asparagine 76, histidine 82, and aspartate 89. The active-site Proton donor is histidine 102. Substrate contacts are provided by residues 103–104 (VS) and arginine 113.

Belongs to the type-II 3-dehydroquinase family. As to quaternary structure, homododecamer.

The enzyme catalyses 3-dehydroquinate = 3-dehydroshikimate + H2O. It functions in the pathway metabolic intermediate biosynthesis; chorismate biosynthesis; chorismate from D-erythrose 4-phosphate and phosphoenolpyruvate: step 3/7. Its function is as follows. Catalyzes a trans-dehydration via an enolate intermediate. The polypeptide is 3-dehydroquinate dehydratase (Herminiimonas arsenicoxydans).